Reading from the N-terminus, the 239-residue chain is NAD(P)H-hydrate epimerase (239 aa).

Positions 14–220 (AAALDQELMS…EMAEQYNLDI (207 aa)) constitute a YjeF N-terminal domain. Residue 64–68 (NNGGD) coordinates (6S)-NADPHX. K(+)-binding residues include Asn65 and Asp126. (6S)-NADPHX contacts are provided by residues 130–136 (GFSFSGE) and Asp159. Position 162 (Ser162) interacts with K(+).

Belongs to the NnrE/AIBP family. It depends on K(+) as a cofactor.

The protein localises to the cytoplasm. The protein resides in the mitochondrion. The catalysed reaction is (6R)-NADHX = (6S)-NADHX. It carries out the reaction (6R)-NADPHX = (6S)-NADPHX. In terms of biological role, catalyzes the epimerization of the S- and R-forms of NAD(P)HX, a damaged form of NAD(P)H that is a result of enzymatic or heat-dependent hydration. This is a prerequisite for the S-specific NAD(P)H-hydrate dehydratase to allow the repair of both epimers of NAD(P)HX. This Phaeosphaeria nodorum (strain SN15 / ATCC MYA-4574 / FGSC 10173) (Glume blotch fungus) protein is NAD(P)H-hydrate epimerase.